A 476-amino-acid chain; its full sequence is ATP synthase subunit beta (476 aa).

Residue 154–161 (GGAGVGKT) coordinates ATP.

Belongs to the ATPase alpha/beta chains family. F-type ATPases have 2 components, CF(1) - the catalytic core - and CF(0) - the membrane proton channel. CF(1) has five subunits: alpha(3), beta(3), gamma(1), delta(1), epsilon(1). CF(0) has four main subunits: a(1), b(1), b'(1) and c(9-12).

The protein resides in the cell inner membrane. It carries out the reaction ATP + H2O + 4 H(+)(in) = ADP + phosphate + 5 H(+)(out). Functionally, produces ATP from ADP in the presence of a proton gradient across the membrane. The catalytic sites are hosted primarily by the beta subunits. This chain is ATP synthase subunit beta, found in Rhodopseudomonas palustris (strain HaA2).